Reading from the N-terminus, the 517-residue chain is Ovoinhibitor (517 aa).

7 Kazal-like domains span residues 67 to 132 (FGIE…ECRP), 133 to 197 (KHVT…ECKL), 198 to 263 (EIGS…KCRQ), 264 to 329 (EIPE…RCKE), 330 to 394 (RSTP…RCRE), 395 to 460 (EVPE…RCEE), and 461 to 517 (DITK…MAAC). Asparagine 72 carries N-linked (GlcNAc...) asparagine glycosylation. Intrachain disulfides connect cysteine 73–cysteine 112, cysteine 90–cysteine 109, cysteine 98–cysteine 130, cysteine 139–cysteine 177, cysteine 155–cysteine 174, cysteine 163–cysteine 195, cysteine 204–cysteine 243, cysteine 221–cysteine 240, cysteine 229–cysteine 261, cysteine 270–cysteine 309, cysteine 287–cysteine 306, cysteine 295–cysteine 327, cysteine 336–cysteine 374, cysteine 352–cysteine 371, cysteine 360–cysteine 392, cysteine 401–cysteine 440, cysteine 418–cysteine 437, cysteine 426–cysteine 458, cysteine 467–cysteine 499, cysteine 477–cysteine 496, and cysteine 485–cysteine 517. N-linked (GlcNAc...) asparagine glycosylation is present at asparagine 186. A glycan (N-linked (GlcNAc...) asparagine) is linked at asparagine 506.

Glycosylated. In terms of tissue distribution, expressed in oviduct (at protein level). Expressed in egg white (at protein level). Expressed in egg yolk plasma of non-fertilized eggs (at protein level). Expressed in the magnum of the oviduct (at protein level). Expressed in oviduct. Expressed in liver. Expressed in the cortico-medullary border region of the bursa of Fabricius by the bursal secretory dendritic-like cells. Highly expressed in the magnum of the oviduct, and at a lower level in uterus. Weakly expressed in white isthmus and very weakly in infundibulum. Not expressed in duodenum and kidney.

Its subcellular location is the secreted. Functionally, serine protease inhibitor involved in antimicrobial egg defense preventing contamination of table eggs (non-fertilized eggs) and protecting the chick embryo (fertilized eggs). Inhibits trypsin, chymotrypsin, elastase, subtilisin and a proteinase of fungus Aspergillus oryzae. Inhibits calcium-activated potassium channels KCNMA1 (bovine) and slo (Drosophila). Has antibacterial activity against B.thuringiensis LMSA 3.06.004, but not against S.aureus CIP 103 811, P.aeruginosa PAO1, B.cereus ATCC6464 or B.subtilis ATCC 6633. In Gallus gallus (Chicken), this protein is Ovoinhibitor.